Consider the following 88-residue polypeptide: Small ribosomal subunit protein uS15 (88 aa).

The protein belongs to the universal ribosomal protein uS15 family. As to quaternary structure, part of the 30S ribosomal subunit. Forms a bridge to the 50S subunit in the 70S ribosome, contacting the 23S rRNA.

Functionally, one of the primary rRNA binding proteins, it binds directly to 16S rRNA where it helps nucleate assembly of the platform of the 30S subunit by binding and bridging several RNA helices of the 16S rRNA. In terms of biological role, forms an intersubunit bridge (bridge B4) with the 23S rRNA of the 50S subunit in the ribosome. The protein is Small ribosomal subunit protein uS15 of Mycoplasmopsis pulmonis (strain UAB CTIP) (Mycoplasma pulmonis).